The following is a 356-amino-acid chain: UDP-N-acetylglucosamine--N-acetylmuramyl-(pentapeptide) pyrophosphoryl-undecaprenol N-acetylglucosamine transferase (356 aa).

UDP-N-acetyl-alpha-D-glucosamine contacts are provided by residues 12–14, N124, R163, S188, I242, 261–266, and Q287; these read TGG and ALTVCE.

Belongs to the glycosyltransferase 28 family. MurG subfamily.

The protein resides in the cell inner membrane. The enzyme catalyses di-trans,octa-cis-undecaprenyl diphospho-N-acetyl-alpha-D-muramoyl-L-alanyl-D-glutamyl-meso-2,6-diaminopimeloyl-D-alanyl-D-alanine + UDP-N-acetyl-alpha-D-glucosamine = di-trans,octa-cis-undecaprenyl diphospho-[N-acetyl-alpha-D-glucosaminyl-(1-&gt;4)]-N-acetyl-alpha-D-muramoyl-L-alanyl-D-glutamyl-meso-2,6-diaminopimeloyl-D-alanyl-D-alanine + UDP + H(+). Its pathway is cell wall biogenesis; peptidoglycan biosynthesis. Its function is as follows. Cell wall formation. Catalyzes the transfer of a GlcNAc subunit on undecaprenyl-pyrophosphoryl-MurNAc-pentapeptide (lipid intermediate I) to form undecaprenyl-pyrophosphoryl-MurNAc-(pentapeptide)GlcNAc (lipid intermediate II). In Stutzerimonas stutzeri (strain A1501) (Pseudomonas stutzeri), this protein is UDP-N-acetylglucosamine--N-acetylmuramyl-(pentapeptide) pyrophosphoryl-undecaprenol N-acetylglucosamine transferase.